Here is a 226-residue protein sequence, read N- to C-terminus: Ribose-5-phosphate isomerase A (226 aa).

Substrate is bound by residues 28 to 31 (TGST), 84 to 87 (DGAD), and 97 to 100 (KGLG). Residue glutamate 106 is the Proton acceptor of the active site. Lysine 124 is a substrate binding site.

The protein belongs to the ribose 5-phosphate isomerase family. Homodimer.

It catalyses the reaction aldehydo-D-ribose 5-phosphate = D-ribulose 5-phosphate. Its pathway is carbohydrate degradation; pentose phosphate pathway; D-ribose 5-phosphate from D-ribulose 5-phosphate (non-oxidative stage): step 1/1. In terms of biological role, catalyzes the reversible conversion of ribose-5-phosphate to ribulose 5-phosphate. In Deinococcus radiodurans (strain ATCC 13939 / DSM 20539 / JCM 16871 / CCUG 27074 / LMG 4051 / NBRC 15346 / NCIMB 9279 / VKM B-1422 / R1), this protein is Ribose-5-phosphate isomerase A.